The sequence spans 310 residues: Nuclear hormone receptor family member nhr-89 (310 aa).

Positions 5–79 (EGPCRVCHSV…SGMRRDCVRK (75 aa)) form a DNA-binding region, nuclear receptor. 2 consecutive NR C4-type zinc fingers follow at residues 8–29 (CRVCHSVKGTRRHFGITACMSC) and 43–67 (CPANNSCTILDDQKQFCRSCRYNKC). An NR LBD domain is found at 101-310 (KLSESYEELL…TLHQKYQIPF (210 aa)).

This sequence belongs to the nuclear hormone receptor family.

The protein resides in the nucleus. Its function is as follows. Orphan nuclear receptor. The polypeptide is Nuclear hormone receptor family member nhr-89 (nhr-89) (Caenorhabditis elegans).